Reading from the N-terminus, the 370-residue chain is 3-dehydroquinate synthase (370 aa).

Residues 107–111 (GVIGD), 131–132 (TS), K144, and K153 contribute to the NAD(+) site. Positions 186, 249, and 267 each coordinate Zn(2+).

The protein belongs to the sugar phosphate cyclases superfamily. Dehydroquinate synthase family. It depends on Co(2+) as a cofactor. The cofactor is Zn(2+). NAD(+) is required as a cofactor.

The protein localises to the cytoplasm. It carries out the reaction 7-phospho-2-dehydro-3-deoxy-D-arabino-heptonate = 3-dehydroquinate + phosphate. It participates in metabolic intermediate biosynthesis; chorismate biosynthesis; chorismate from D-erythrose 4-phosphate and phosphoenolpyruvate: step 2/7. Functionally, catalyzes the conversion of 3-deoxy-D-arabino-heptulosonate 7-phosphate (DAHP) to dehydroquinate (DHQ). This chain is 3-dehydroquinate synthase, found in Ruegeria pomeroyi (strain ATCC 700808 / DSM 15171 / DSS-3) (Silicibacter pomeroyi).